Reading from the N-terminus, the 930-residue chain is uncharacterized protein (930 aa).

The Nuclear localization signal signature appears at 434–441; that stretch reads IRRGISRK.

The protein localises to the nucleus. This is an uncharacterized protein from Chaetomium thermophilum (strain DSM 1495 / CBS 144.50 / IMI 039719) (Thermochaetoides thermophila).